Here is a 263-residue protein sequence, read N- to C-terminus: 4-hydroxy-tetrahydrodipicolinate reductase (263 aa).

Residue 10 to 15 (GASGKM) coordinates NAD(+). Position 38 (R38) interacts with NADP(+). NAD(+) is bound by residues 97-99 (GTT) and 123-126 (APNF). H153 acts as the Proton donor/acceptor in catalysis. (S)-2,3,4,5-tetrahydrodipicolinate is bound at residue H154. The active-site Proton donor is the K157. 163–164 (GT) provides a ligand contact to (S)-2,3,4,5-tetrahydrodipicolinate.

This sequence belongs to the DapB family.

The protein localises to the cytoplasm. The catalysed reaction is (S)-2,3,4,5-tetrahydrodipicolinate + NAD(+) + H2O = (2S,4S)-4-hydroxy-2,3,4,5-tetrahydrodipicolinate + NADH + H(+). It catalyses the reaction (S)-2,3,4,5-tetrahydrodipicolinate + NADP(+) + H2O = (2S,4S)-4-hydroxy-2,3,4,5-tetrahydrodipicolinate + NADPH + H(+). It participates in amino-acid biosynthesis; L-lysine biosynthesis via DAP pathway; (S)-tetrahydrodipicolinate from L-aspartate: step 4/4. In terms of biological role, catalyzes the conversion of 4-hydroxy-tetrahydrodipicolinate (HTPA) to tetrahydrodipicolinate. The polypeptide is 4-hydroxy-tetrahydrodipicolinate reductase (Dehalococcoides mccartyi (strain CBDB1)).